Here is a 210-residue protein sequence, read N- to C-terminus: ATP-dependent Clp protease proteolytic subunit 1 (210 aa).

S106 functions as the Nucleophile in the catalytic mechanism. Residue H131 is part of the active site.

Belongs to the peptidase S14 family. As to quaternary structure, fourteen ClpP subunits assemble into 2 heptameric rings which stack back to back to give a disk-like structure with a central cavity, resembling the structure of eukaryotic proteasomes.

The protein resides in the cytoplasm. It catalyses the reaction Hydrolysis of proteins to small peptides in the presence of ATP and magnesium. alpha-casein is the usual test substrate. In the absence of ATP, only oligopeptides shorter than five residues are hydrolyzed (such as succinyl-Leu-Tyr-|-NHMec, and Leu-Tyr-Leu-|-Tyr-Trp, in which cleavage of the -Tyr-|-Leu- and -Tyr-|-Trp bonds also occurs).. Its function is as follows. Cleaves peptides in various proteins in a process that requires ATP hydrolysis. Has a chymotrypsin-like activity. Plays a major role in the degradation of misfolded proteins. The chain is ATP-dependent Clp protease proteolytic subunit 1 from Chelativorans sp. (strain BNC1).